The following is a 152-amino-acid chain: Protein-export protein SecB (152 aa).

Belongs to the SecB family. In terms of assembly, homotetramer, a dimer of dimers. One homotetramer interacts with 1 SecA dimer.

The protein localises to the cytoplasm. One of the proteins required for the normal export of preproteins out of the cell cytoplasm. It is a molecular chaperone that binds to a subset of precursor proteins, maintaining them in a translocation-competent state. It also specifically binds to its receptor SecA. The polypeptide is Protein-export protein SecB (Rickettsia rickettsii (strain Iowa)).